We begin with the raw amino-acid sequence, 143 residues long: Holo-[acyl-carrier-protein] synthase (143 aa).

Positions 9 and 63 each coordinate Mg(2+).

This sequence belongs to the P-Pant transferase superfamily. AcpS family. The cofactor is Mg(2+).

Its subcellular location is the cytoplasm. The catalysed reaction is apo-[ACP] + CoA = holo-[ACP] + adenosine 3',5'-bisphosphate + H(+). Its function is as follows. Transfers the 4'-phosphopantetheine moiety from coenzyme A to a Ser of acyl-carrier-protein. The sequence is that of Holo-[acyl-carrier-protein] synthase from Burkholderia mallei (strain NCTC 10247).